The chain runs to 639 residues: Putative cyclic beta-1,2-glucan modification protein (639 aa).

6 helical membrane-spanning segments follow: residues 34-54, 69-89, 96-116, 144-164, 185-205, and 227-247; these read ALFT…IVRW, PAWT…ALFG, LLIA…QVFL, WTAV…ALLL, FALP…FSWI, and FALA…AGYM.

It is found in the cell membrane. This Rhizobium meliloti (strain 1021) (Ensifer meliloti) protein is Putative cyclic beta-1,2-glucan modification protein (cgmA).